We begin with the raw amino-acid sequence, 117 residues long: Class I hydrophobin 2 (117 aa).

The first 21 residues, 1–21 (EIVSLSLSLLAVVPLVVLVIA), serve as a signal peptide directing secretion. 4 disulfide bridges follow: cysteine 35-cysteine 96, cysteine 42-cysteine 90, cysteine 43-cysteine 76, and cysteine 97-cysteine 110.

This sequence belongs to the fungal hydrophobin family. Self-assembles to form functional amyloid fibrils called rodlets. Self-assembly into fibrillar rodlets occurs spontaneously at hydrophobic:hydrophilic interfaces and the rodlets further associate laterally to form amphipathic monolayers.

The protein resides in the secreted. It localises to the cell wall. Functionally, aerial growth, conidiation, and dispersal of filamentous fungi in the environment rely upon a capability of their secreting small amphipathic proteins called hydrophobins (HPBs) with low sequence identity. Class I can self-assemble into an outermost layer of rodlet bundles on aerial cell surfaces, conferring cellular hydrophobicity that supports fungal growth, development and dispersal; whereas Class II form highly ordered films at water-air interfaces through intermolecular interactions but contribute nothing to the rodlet structure. This chain is Class I hydrophobin 2, found in Pisolithus tinctorius (Dead man's foot).